A 349-amino-acid polypeptide reads, in one-letter code: MSQLILGIESSCDETGVALVRAGEGGAVPVLLAHALHSQIDMHQAYGGVVPELASRDHIRRVLPLTREVLRESGERLEDVDVVAYTRGPGLAGALLVGAGVACALGAALDKPVLGVHHLEGHLLSPFLSSDPPEFPFVALLVSGGHTQLMRVEGVGRYEILGETIDDAAGEAFDKSAKLMGLGYPGGPALSRLAEQGSATAFKLPRPLLHSGDLDFSFAGLKTAVLTQAKKLGDELTARKADLAASTEAAIVEVLVKKTLAALQKTGLQRVVVAGGVGANRHLRAQLNAACARAKVRVHYPELHLCTDNGAMIAMAAAMRLQAGQQQPNRDYAFDVKPRWPLDAITLAA.

2 residues coordinate Fe cation: His-118 and His-122. Substrate is bound by residues 141 to 145 (LVSGG), Asp-174, Gly-187, and Asn-280. Asp-308 contributes to the Fe cation binding site.

Belongs to the KAE1 / TsaD family. Requires Fe(2+) as cofactor.

It localises to the cytoplasm. The catalysed reaction is L-threonylcarbamoyladenylate + adenosine(37) in tRNA = N(6)-L-threonylcarbamoyladenosine(37) in tRNA + AMP + H(+). Its function is as follows. Required for the formation of a threonylcarbamoyl group on adenosine at position 37 (t(6)A37) in tRNAs that read codons beginning with adenine. Is involved in the transfer of the threonylcarbamoyl moiety of threonylcarbamoyl-AMP (TC-AMP) to the N6 group of A37, together with TsaE and TsaB. TsaD likely plays a direct catalytic role in this reaction. The chain is tRNA N6-adenosine threonylcarbamoyltransferase from Acidovorax sp. (strain JS42).